Reading from the N-terminus, the 86-residue chain is Large ribosomal subunit protein bL31B (86 aa).

Belongs to the bacterial ribosomal protein bL31 family. Type B subfamily. As to quaternary structure, part of the 50S ribosomal subunit.

The sequence is that of Large ribosomal subunit protein bL31B from Vibrio parahaemolyticus serotype O3:K6 (strain RIMD 2210633).